The following is a 385-amino-acid chain: Probable splicing factor YJU2B (385 aa).

Positions 1–26 (MGERKGQNKYYPPDFNPEKHGSLNRY) are disordered. Residue serine 40 is modified to Phosphoserine. A coiled-coil region spans residues 182–214 (LNSMLRRHFREKKKAMQEEEEKDQALQAKASLA). The interval 257 to 385 (PSAQGPSASS…VADYSDSESE (129 aa)) is disordered. Low complexity predominate over residues 258 to 271 (SAQGPSASSSKASS). Serine 306 is subject to Phosphoserine. Residues 359–373 (GSSQEDLLNPNTPNA) are compositionally biased toward polar residues.

It belongs to the CWC16 family.

The protein resides in the nucleus. Its function is as follows. May be involved in mRNA splicing. This Mus musculus (Mouse) protein is Probable splicing factor YJU2B (Yju2b).